A 447-amino-acid chain; its full sequence is UDP-N-acetylmuramoylalanine--D-glutamate ligase (447 aa).

Residue 112–118 (GTNGKST) participates in ATP binding.

This sequence belongs to the MurCDEF family.

The protein resides in the cytoplasm. The enzyme catalyses UDP-N-acetyl-alpha-D-muramoyl-L-alanine + D-glutamate + ATP = UDP-N-acetyl-alpha-D-muramoyl-L-alanyl-D-glutamate + ADP + phosphate + H(+). The protein operates within cell wall biogenesis; peptidoglycan biosynthesis. In terms of biological role, cell wall formation. Catalyzes the addition of glutamate to the nucleotide precursor UDP-N-acetylmuramoyl-L-alanine (UMA). This is UDP-N-acetylmuramoylalanine--D-glutamate ligase from Legionella pneumophila (strain Paris).